Here is an 814-residue protein sequence, read N- to C-terminus: Rho GTPase-activating protein 26 (814 aa).

A BAR domain is found at 7–262; sequence EFSDCCLDSP…MKENPLEHKT (256 aa). The region spanning 265-369 is the PH domain; that stretch reads PYTMEGYLYV…WMEAMDGREP (105 aa). The Rho-GAP domain occupies 383 to 568; the sequence is AQLDSIGFSI…ILIENHEKIF (186 aa). The segment covering 624-648 has biased composition (low complexity); that stretch reads LESVSSNPNSILNSSSSLQPNMNSS. Residues 624 to 696 form a disordered region; it reads LESVSSNPNS…MPTSSTSSDS (73 aa). Pro residues predominate over residues 662-672; that stretch reads SLPPNPSPTSP. Ser668 bears the Phosphoserine mark. Thr670 bears the Phosphothreonine mark. Ser671 bears the Phosphoserine mark. Over residues 673 to 696 the composition is skewed to low complexity; it reads LSPSWPMFSAPSSPMPTSSTSSDS. In terms of domain architecture, SH3 spans 756–814; that stretch reads TPFRKAKALYACKAEHDSELSFTAGTVFDNVHPSQEPGWLEGTLNGKTGLIPENYVEFL.

Interacts with NYAP1, NYAP2 and MYO16. Interacts with MICAL1 and WDR44. Binds to the C-terminus of PTK2/FAK1. In terms of assembly, (Microbial infection) Interacts with human parainfluenza virus type 2 proteins P and V. Phosphorylated in a PINK1-dependent fashion promoting retrograde mitochondrial trafficking and clustering.

The protein localises to the endosome membrane. It localises to the cytoplasm. It is found in the cell junction. The protein resides in the focal adhesion. Its subcellular location is the cytoskeleton. GTPase-activating protein for RHOA and CDC42. Facilitates mitochondrial quality control by promoting Parkin-mediated recruitment of autophagosomes to damaged mitochondria. Negatively regulates the growth of human parainfluenza virus type 2 by inhibiting hPIV-2-mediated RHOA activation via interaction with two of its viral proteins P and V. In terms of biological role, associates with MICAL1 on the endosomal membrane to promote Rab8-Rab10-dependent tubule extension. After dissociation of MICAL1, recruits WDR44 which connects the endoplasmic reticulum (ER) with the endosomal tubule, thereby participating in the export of a subset of neosynthesized proteins. In Homo sapiens (Human), this protein is Rho GTPase-activating protein 26 (ARHGAP26).